We begin with the raw amino-acid sequence, 146 residues long: Large ribosomal subunit protein uL15 (146 aa).

The span at 1–10 (MKLHELKPAE) shows a compositional bias: basic and acidic residues. The tract at residues 1–51 (MKLHELKPAEGSRQVRNRVGRGTSSGNGKTAGRGQKGQKARSGGGVRLGFE) is disordered. Gly residues-rich tracts occupy residues 23–35 (TSSGNGKTAGRGQ) and 42–51 (SGGGVRLGFE).

Belongs to the universal ribosomal protein uL15 family. In terms of assembly, part of the 50S ribosomal subunit.

Binds to the 23S rRNA. The sequence is that of Large ribosomal subunit protein uL15 from Enterococcus faecalis (strain ATCC 700802 / V583).